Here is a 291-residue protein sequence, read N- to C-terminus: Lipoyl synthase (291 aa).

7 residues coordinate [4Fe-4S] cluster: Cys-43, Cys-48, Cys-54, Cys-69, Cys-73, Cys-76, and Ser-280. Positions Phe-55 to Pro-269 constitute a Radical SAM core domain.

It belongs to the radical SAM superfamily. Lipoyl synthase family. Requires [4Fe-4S] cluster as cofactor.

Its subcellular location is the cytoplasm. The catalysed reaction is [[Fe-S] cluster scaffold protein carrying a second [4Fe-4S](2+) cluster] + N(6)-octanoyl-L-lysyl-[protein] + 2 oxidized [2Fe-2S]-[ferredoxin] + 2 S-adenosyl-L-methionine + 4 H(+) = [[Fe-S] cluster scaffold protein] + N(6)-[(R)-dihydrolipoyl]-L-lysyl-[protein] + 4 Fe(3+) + 2 hydrogen sulfide + 2 5'-deoxyadenosine + 2 L-methionine + 2 reduced [2Fe-2S]-[ferredoxin]. It functions in the pathway protein modification; protein lipoylation via endogenous pathway; protein N(6)-(lipoyl)lysine from octanoyl-[acyl-carrier-protein]: step 2/2. Its function is as follows. Catalyzes the radical-mediated insertion of two sulfur atoms into the C-6 and C-8 positions of the octanoyl moiety bound to the lipoyl domains of lipoate-dependent enzymes, thereby converting the octanoylated domains into lipoylated derivatives. This chain is Lipoyl synthase, found in Oleidesulfovibrio alaskensis (strain ATCC BAA-1058 / DSM 17464 / G20) (Desulfovibrio alaskensis).